Here is a 688-residue protein sequence, read N- to C-terminus: DNA ligase (688 aa).

NAD(+) is bound by residues aspartate 38–aspartate 42, serine 87–leucine 88, and glutamate 118. Residue lysine 120 is the N6-AMP-lysine intermediate of the active site. Positions 141, 175, 291, and 315 each coordinate NAD(+). Residues cysteine 409, cysteine 412, cysteine 428, and cysteine 433 each coordinate Zn(2+). The BRCT domain maps to methionine 590–glutamate 679.

This sequence belongs to the NAD-dependent DNA ligase family. LigA subfamily. Mg(2+) serves as cofactor. The cofactor is Mn(2+).

It carries out the reaction NAD(+) + (deoxyribonucleotide)n-3'-hydroxyl + 5'-phospho-(deoxyribonucleotide)m = (deoxyribonucleotide)n+m + AMP + beta-nicotinamide D-nucleotide.. DNA ligase that catalyzes the formation of phosphodiester linkages between 5'-phosphoryl and 3'-hydroxyl groups in double-stranded DNA using NAD as a coenzyme and as the energy source for the reaction. It is essential for DNA replication and repair of damaged DNA. In Thermotoga petrophila (strain ATCC BAA-488 / DSM 13995 / JCM 10881 / RKU-1), this protein is DNA ligase.